We begin with the raw amino-acid sequence, 293 residues long: Phosphate import ATP-binding protein PstB (293 aa).

Positions 46 to 288 (FGIRGVDVFY…PDHELTEAYI (243 aa)) constitute an ABC transporter domain. Residue 78–85 (GPSGCGKS) coordinates ATP.

This sequence belongs to the ABC transporter superfamily. Phosphate importer (TC 3.A.1.7) family. The complex is composed of two ATP-binding proteins (PstB), two transmembrane proteins (PstC and PstA) and a solute-binding protein (PstS).

It is found in the cell inner membrane. It catalyses the reaction phosphate(out) + ATP + H2O = ADP + 2 phosphate(in) + H(+). In terms of biological role, part of the ABC transporter complex PstSACB involved in phosphate import. Responsible for energy coupling to the transport system. In Saccharophagus degradans (strain 2-40 / ATCC 43961 / DSM 17024), this protein is Phosphate import ATP-binding protein PstB.